The primary structure comprises 501 residues: Aspartyl/glutamyl-tRNA(Asn/Gln) amidotransferase subunit B (501 aa).

It belongs to the GatB/GatE family. GatB subfamily. As to quaternary structure, heterotrimer of A, B and C subunits.

It catalyses the reaction L-glutamyl-tRNA(Gln) + L-glutamine + ATP + H2O = L-glutaminyl-tRNA(Gln) + L-glutamate + ADP + phosphate + H(+). It carries out the reaction L-aspartyl-tRNA(Asn) + L-glutamine + ATP + H2O = L-asparaginyl-tRNA(Asn) + L-glutamate + ADP + phosphate + 2 H(+). Its function is as follows. Allows the formation of correctly charged Asn-tRNA(Asn) or Gln-tRNA(Gln) through the transamidation of misacylated Asp-tRNA(Asn) or Glu-tRNA(Gln) in organisms which lack either or both of asparaginyl-tRNA or glutaminyl-tRNA synthetases. The reaction takes place in the presence of glutamine and ATP through an activated phospho-Asp-tRNA(Asn) or phospho-Glu-tRNA(Gln). This chain is Aspartyl/glutamyl-tRNA(Asn/Gln) amidotransferase subunit B, found in Mycobacterium sp. (strain KMS).